The following is a 144-amino-acid chain: Large ribosomal subunit protein uL13 (144 aa).

It belongs to the universal ribosomal protein uL13 family. As to quaternary structure, part of the 50S ribosomal subunit.

In terms of biological role, this protein is one of the early assembly proteins of the 50S ribosomal subunit, although it is not seen to bind rRNA by itself. It is important during the early stages of 50S assembly. The polypeptide is Large ribosomal subunit protein uL13 (Chloroflexus aurantiacus (strain ATCC 29366 / DSM 635 / J-10-fl)).